The sequence spans 389 residues: 8-amino-7-oxononanoate synthase (389 aa).

Residue R31 coordinates substrate. 109 to 110 (GY) lines the pyridoxal 5'-phosphate pocket. H134 serves as a coordination point for substrate. Residues S180, 205–208 (DEAH), and 236–239 (TLSK) contribute to the pyridoxal 5'-phosphate site. K239 carries the post-translational modification N6-(pyridoxal phosphate)lysine. T349 is a substrate binding site.

This sequence belongs to the class-II pyridoxal-phosphate-dependent aminotransferase family. BioF subfamily. In terms of assembly, homodimer. It depends on pyridoxal 5'-phosphate as a cofactor.

The enzyme catalyses 6-carboxyhexanoyl-[ACP] + L-alanine + H(+) = (8S)-8-amino-7-oxononanoate + holo-[ACP] + CO2. The protein operates within cofactor biosynthesis; biotin biosynthesis. Its function is as follows. Catalyzes the decarboxylative condensation of pimeloyl-[acyl-carrier protein] and L-alanine to produce 8-amino-7-oxononanoate (AON), [acyl-carrier protein], and carbon dioxide. This chain is 8-amino-7-oxononanoate synthase, found in Mycobacterium marinum (strain ATCC BAA-535 / M).